A 329-amino-acid chain; its full sequence is Isopenicillin N synthase (329 aa).

Residues Arg-87, Tyr-91, Ser-183, and Tyr-189 each coordinate isopenicillin N. N-[(5S)-5-amino-5-carboxypentanoyl]-L-cysteinyl-D-valine contacts are provided by Arg-87, Tyr-91, Ser-183, Tyr-189, His-212, and Asp-214. Residues 180–286 (TLSSVSLIRY…RLSLPFFLNA (107 aa)) enclose the Fe2OG dioxygenase domain. Fe(2+) contacts are provided by His-212, Asp-214, and His-268. Arg-277 serves as a coordination point for 2-oxoglutarate. Isopenicillin N is bound at residue Ser-279. Ser-279 serves as a coordination point for N-[(5S)-5-amino-5-carboxypentanoyl]-L-cysteinyl-D-valine.

Belongs to the iron/ascorbate-dependent oxidoreductase family. Fe cation serves as cofactor. It depends on L-ascorbate as a cofactor.

It catalyses the reaction N-[(5S)-5-amino-5-carboxypentanoyl]-L-cysteinyl-D-valine + O2 = isopenicillin N + 2 H2O. It functions in the pathway antibiotic biosynthesis; penicillin G biosynthesis; penicillin G from L-alpha-aminoadipate and L-cysteine and L-valine: step 2/3. Functionally, removes, in the presence of oxygen, 4 hydrogen atoms from delta-L-(alpha-aminoadipyl)-L-cysteinyl-D-valine (ACV) to form the azetidinone and thiazolidine rings of isopenicillin. This Streptomyces jumonjinensis protein is Isopenicillin N synthase (pcbC).